A 789-amino-acid chain; its full sequence is Glycerol-3-phosphate acyltransferase (789 aa).

The HXXXXD motif signature appears at 276-281 (HRSYID).

It belongs to the GPAT/DAPAT family.

It localises to the cell membrane. The catalysed reaction is sn-glycerol 3-phosphate + an acyl-CoA = a 1-acyl-sn-glycero-3-phosphate + CoA. It functions in the pathway phospholipid metabolism; CDP-diacylglycerol biosynthesis; CDP-diacylglycerol from sn-glycerol 3-phosphate: step 1/3. The polypeptide is Glycerol-3-phosphate acyltransferase (Mycobacterium bovis (strain ATCC BAA-935 / AF2122/97)).